Reading from the N-terminus, the 427-residue chain is Glycophorin-binding protein-related antigen (427 aa).

8 GBP repeats span residues 109–149 (LTSA…DELE), 150–189 (TSAD…DEVE), 190–229 (SSAD…DELE), 230–269 (TSAD…EVET), 270–307 (SADP…SEVE), 308–347 (TSAD…DELE), 348–387 (TSAD…DELE), and 388–427 (TSAD…DESS).

The sequence is that of Glycophorin-binding protein-related antigen (GBPH) from Plasmodium falciparum (isolate FCBR / Columbia).